Consider the following 577-residue polypeptide: PTS system lactose-specific EIICB component (577 aa).

Positions 4–405 (VFDKLKPVFE…VLDVAIYFPF (402 aa)) constitute a PTS EIIC type-3 domain. The next 9 helical transmembrane spans lie at 27–47 (GFIA…VAYV), 63–83 (LMVA…GTTA), 100–120 (INPV…SILP), 133–153 (QGLI…YVCI), 176–196 (LIPM…FKAA), 219–239 (YLGL…GVQG), 280–300 (VMNF…LFAA), 326–346 (FGMP…TPIV), and 386–406 (LAFV…FPFI). One can recognise a PTS EIIB type-3 domain in the interval 476-577 (EVDVLVLCAG…MALDFVESNL (102 aa)). The Phosphocysteine intermediate; for EIIB activity role is filled by cysteine 483. The residue at position 483 (cysteine 483) is a Phosphocysteine; by EIIA.

Its subcellular location is the cell membrane. It carries out the reaction lactose(out) + N(pros)-phospho-L-histidyl-[protein] = lactose 6-phosphate(in) + L-histidyl-[protein]. Functionally, the phosphoenolpyruvate-dependent sugar phosphotransferase system (sugar PTS), a major carbohydrate active transport system, catalyzes the phosphorylation of incoming sugar substrates concomitantly with their translocation across the cell membrane. The enzyme II LacEF PTS system is involved in lactose transport. The protein is PTS system lactose-specific EIICB component of Lacticaseibacillus casei (Lactobacillus casei).